Consider the following 168-residue polypeptide: Ribosome maturation factor RimM (168 aa).

One can recognise a PRC barrel domain in the interval 95 to 168 (KEGDYYWTDL…IIVVEWDADF (74 aa)).

The protein belongs to the RimM family. Binds ribosomal protein uS19.

It localises to the cytoplasm. An accessory protein needed during the final step in the assembly of 30S ribosomal subunit, possibly for assembly of the head region. Essential for efficient processing of 16S rRNA. May be needed both before and after RbfA during the maturation of 16S rRNA. It has affinity for free ribosomal 30S subunits but not for 70S ribosomes. The sequence is that of Ribosome maturation factor RimM from Coxiella burnetii (strain CbuK_Q154) (Coxiella burnetii (strain Q154)).